The following is a 325-amino-acid chain: Aspartate carbamoyltransferase catalytic subunit (325 aa).

Positions 55 and 56 each coordinate carbamoyl phosphate. An L-aspartate-binding site is contributed by Lys-83. Residues Arg-105, His-135, and Gln-138 each coordinate carbamoyl phosphate. Positions 176 and 230 each coordinate L-aspartate. 2 residues coordinate carbamoyl phosphate: Gly-271 and Pro-272.

It belongs to the aspartate/ornithine carbamoyltransferase superfamily. ATCase family. Heterododecamer (2C3:3R2) of six catalytic PyrB chains organized as two trimers (C3), and six regulatory PyrI chains organized as three dimers (R2).

It catalyses the reaction carbamoyl phosphate + L-aspartate = N-carbamoyl-L-aspartate + phosphate + H(+). Its pathway is pyrimidine metabolism; UMP biosynthesis via de novo pathway; (S)-dihydroorotate from bicarbonate: step 2/3. In terms of biological role, catalyzes the condensation of carbamoyl phosphate and aspartate to form carbamoyl aspartate and inorganic phosphate, the committed step in the de novo pyrimidine nucleotide biosynthesis pathway. The polypeptide is Aspartate carbamoyltransferase catalytic subunit (Streptomyces avermitilis (strain ATCC 31267 / DSM 46492 / JCM 5070 / NBRC 14893 / NCIMB 12804 / NRRL 8165 / MA-4680)).